Reading from the N-terminus, the 119-residue chain is Virulence protein VsdF (119 aa).

In terms of biological role, expressed but non-essential protein, involved in the virulence of Salmonellas. The sequence is that of Virulence protein VsdF (vsdF) from Salmonella dublin.